The sequence spans 337 residues: DNA-directed RNA polymerase subunit alpha (337 aa).

The alpha N-terminal domain (alpha-NTD) stretch occupies residues 1–233 (MVREKVRVST…DLFIPFLHAE (233 aa)). Residues 267–337 (IALKSIFIDQ…KAFHNPFTEE (71 aa)) form an alpha C-terminal domain (alpha-CTD) region.

It belongs to the RNA polymerase alpha chain family. In terms of assembly, in plastids the minimal PEP RNA polymerase catalytic core is composed of four subunits: alpha, beta, beta', and beta''. When a (nuclear-encoded) sigma factor is associated with the core the holoenzyme is formed, which can initiate transcription.

Its subcellular location is the plastid. It is found in the chloroplast. The catalysed reaction is RNA(n) + a ribonucleoside 5'-triphosphate = RNA(n+1) + diphosphate. Its function is as follows. DNA-dependent RNA polymerase catalyzes the transcription of DNA into RNA using the four ribonucleoside triphosphates as substrates. In Eucalyptus globulus subsp. globulus (Tasmanian blue gum), this protein is DNA-directed RNA polymerase subunit alpha.